We begin with the raw amino-acid sequence, 1526 residues long: High affinity cGMP-specific 3',5'-cyclic phosphodiesterase 9A (1526 aa).

Positions M1 to S43 are enriched in low complexity. 3 disordered regions span residues M1–T48, S266–A348, and R393–C476. 2 stretches are compositionally biased toward basic and acidic residues: residues R270–D282 and E305–T314. Low complexity-rich tracts occupy residues I324–A348 and Q401–T440. A compositionally biased stretch (polar residues) spans P441–P462. The PDEase domain occupies V664–Q985. H740 functions as the Proton donor in the catalytic mechanism. H740–H744 is a binding site for 3',5'-cyclic GMP. Positions 744, 780, 781, and 890 each coordinate Zn(2+). D781 and D890 together coordinate 3',5'-cyclic GMP. D781 is a Mg(2+) binding site. Disordered stretches follow at residues T986–G1170, T1265–P1284, S1314–W1351, R1372–G1406, and R1469–G1496. Positions A993 to S1005 are enriched in low complexity. Over residues N1033–C1057 the composition is skewed to gly residues. Positions V1065 to T1093 are enriched in polar residues. Residues V1125–T1136 show a composition bias toward basic and acidic residues. The span at S1139–S1148 shows a compositional bias: low complexity. A compositionally biased stretch (low complexity) spans S1314–S1324. The segment covering G1325–M1340 has biased composition (gly residues). 2 stretches are compositionally biased toward low complexity: residues P1341–S1350 and S1375–G1397. Residues Y1470 to S1486 are compositionally biased toward polar residues.

This sequence belongs to the cyclic nucleotide phosphodiesterase family. PDE9 subfamily. It depends on Zn(2+) as a cofactor. Mg(2+) serves as cofactor. In terms of tissue distribution, expressed in Malpighian tubules and adult fly head.

It carries out the reaction 3',5'-cyclic GMP + H2O = GMP + H(+). Its pathway is purine metabolism; 3',5'-cyclic GMP degradation; GMP from 3',5'-cyclic GMP: step 1/1. In terms of biological role, specifically hydrolyzes the second messenger cGMP, which is a key regulator of many important physiological processes. Highly specific: compared to other members of the cyclic nucleotide phosphodiesterase family, has the highest affinity and selectivity for cGMP. This Drosophila melanogaster (Fruit fly) protein is High affinity cGMP-specific 3',5'-cyclic phosphodiesterase 9A.